Consider the following 264-residue polypeptide: Rhamnosyltransferase WbbL (264 aa).

It belongs to the glycosyltransferase 2 family.

The protein operates within bacterial outer membrane biogenesis; lipopolysaccharide biosynthesis. Rhamnosyltransferase involved in lipopolysaccharide biosynthesis. The polypeptide is Rhamnosyltransferase WbbL (wbbL) (Escherichia coli (strain K12)).